A 435-amino-acid chain; its full sequence is GTPase Der (435 aa).

EngA-type G domains follow at residues 4 to 167 (PTLA…PSED) and 175 to 350 (IKFS…ENQT). GTP-binding positions include 10–17 (GRPNVGKS), 57–61 (DTGGI), 119–122 (NKVD), 181–188 (GRPNVGKS), 228–232 (DTAGI), and 293–296 (NKWD). The region spanning 351–435 (RRIQSSVLND…PIHIIARKRK (85 aa)) is the KH-like domain.

Belongs to the TRAFAC class TrmE-Era-EngA-EngB-Septin-like GTPase superfamily. EngA (Der) GTPase family. In terms of assembly, associates with the 50S ribosomal subunit.

Functionally, GTPase that plays an essential role in the late steps of ribosome biogenesis. The chain is GTPase Der from Lacticaseibacillus casei (strain BL23) (Lactobacillus casei).